The sequence spans 432 residues: 3-phosphoshikimate 1-carboxyvinyltransferase (432 aa).

Residues K23, S24, and R28 each contribute to the 3-phosphoshikimate site. Position 23 (K23) interacts with phosphoenolpyruvate. Phosphoenolpyruvate contacts are provided by G95 and R123. S167, Q169, D317, and K344 together coordinate 3-phosphoshikimate. Q169 provides a ligand contact to phosphoenolpyruvate. D317 serves as the catalytic Proton acceptor. R348 and R390 together coordinate phosphoenolpyruvate.

This sequence belongs to the EPSP synthase family. In terms of assembly, monomer.

Its subcellular location is the cytoplasm. It carries out the reaction 3-phosphoshikimate + phosphoenolpyruvate = 5-O-(1-carboxyvinyl)-3-phosphoshikimate + phosphate. It functions in the pathway metabolic intermediate biosynthesis; chorismate biosynthesis; chorismate from D-erythrose 4-phosphate and phosphoenolpyruvate: step 6/7. In terms of biological role, catalyzes the transfer of the enolpyruvyl moiety of phosphoenolpyruvate (PEP) to the 5-hydroxyl of shikimate-3-phosphate (S3P) to produce enolpyruvyl shikimate-3-phosphate and inorganic phosphate. In Staphylococcus aureus (strain JH9), this protein is 3-phosphoshikimate 1-carboxyvinyltransferase.